The sequence spans 539 residues: CTP synthase (539 aa).

The tract at residues 1-268 (MSFKCIFLTG…STFITEKLGL (268 aa)) is amidoligase domain. A CTP-binding site is contributed by S14. S14 contributes to the UTP binding site. 15-20 (SLGKGL) provides a ligand contact to ATP. Y55 serves as a coordination point for L-glutamine. D72 is a binding site for ATP. Mg(2+) is bound by residues D72 and E142. Residues 149–151 (DIE), 188–193 (KTKPTQ), and K224 each bind CTP. UTP-binding positions include 188–193 (KTKPTQ) and K224. The Glutamine amidotransferase type-1 domain occupies 294 to 533 (RIGLVGKYVQ…IQAAILYSRN (240 aa)). G353 contributes to the L-glutamine binding site. Residue C380 is the Nucleophile; for glutamine hydrolysis of the active site. L-glutamine-binding positions include 381–384 (LGMQ), E404, and R461. Catalysis depends on residues H506 and E508.

The protein belongs to the CTP synthase family. In terms of assembly, homotetramer.

It catalyses the reaction UTP + L-glutamine + ATP + H2O = CTP + L-glutamate + ADP + phosphate + 2 H(+). The enzyme catalyses L-glutamine + H2O = L-glutamate + NH4(+). The catalysed reaction is UTP + NH4(+) + ATP = CTP + ADP + phosphate + 2 H(+). Its pathway is pyrimidine metabolism; CTP biosynthesis via de novo pathway; CTP from UDP: step 2/2. With respect to regulation, allosterically activated by GTP, when glutamine is the substrate; GTP has no effect on the reaction when ammonia is the substrate. The allosteric effector GTP functions by stabilizing the protein conformation that binds the tetrahedral intermediate(s) formed during glutamine hydrolysis. Inhibited by the product CTP, via allosteric rather than competitive inhibition. Functionally, catalyzes the ATP-dependent amination of UTP to CTP with either L-glutamine or ammonia as the source of nitrogen. Regulates intracellular CTP levels through interactions with the four ribonucleotide triphosphates. This chain is CTP synthase, found in Chlamydia felis (strain Fe/C-56) (Chlamydophila felis).